A 432-amino-acid polypeptide reads, in one-letter code: Adenylosuccinate synthetase (432 aa).

Residues 13-19 and 41-43 each bind GTP; these read GDEGKGK and GHT. The active-site Proton acceptor is Asp-14. 2 residues coordinate Mg(2+): Asp-14 and Gly-41. IMP contacts are provided by residues 14–17, 39–42, Thr-131, Arg-145, Gln-226, Thr-241, and Arg-305; these read DEGK and NAGH. The active-site Proton donor is His-42. 301-307 is a binding site for substrate; that stretch reads SVTGRAR. Residues Arg-307, 333-335, and 416-418 each bind GTP; these read KLD and STG.

Belongs to the adenylosuccinate synthetase family. As to quaternary structure, homodimer. It depends on Mg(2+) as a cofactor.

Its subcellular location is the cytoplasm. It carries out the reaction IMP + L-aspartate + GTP = N(6)-(1,2-dicarboxyethyl)-AMP + GDP + phosphate + 2 H(+). It functions in the pathway purine metabolism; AMP biosynthesis via de novo pathway; AMP from IMP: step 1/2. Its function is as follows. Plays an important role in the de novo pathway of purine nucleotide biosynthesis. Catalyzes the first committed step in the biosynthesis of AMP from IMP. This Neisseria meningitidis serogroup C (strain 053442) protein is Adenylosuccinate synthetase.